Here is a 458-residue protein sequence, read N- to C-terminus: D-inositol 3-phosphate glycosyltransferase (458 aa).

A disordered region spans residues 1 to 29 (MRADRPGHRSRGINPGPGMFTLVGPDERD). Residue H47 participates in 1D-myo-inositol 3-phosphate binding. UDP-N-acetyl-alpha-D-glucosamine-binding positions include 53–54 (QP) and G61. Residues 58–63 (DAGGMN), K116, Y149, T173, and R193 contribute to the 1D-myo-inositol 3-phosphate site. R267, K272, and V339 together coordinate UDP-N-acetyl-alpha-D-glucosamine. Residue A351 coordinates Mg(2+). UDP-N-acetyl-alpha-D-glucosamine contacts are provided by E361 and E369. Residue T375 participates in Mg(2+) binding.

Belongs to the glycosyltransferase group 1 family. MshA subfamily. Homodimer.

The enzyme catalyses 1D-myo-inositol 3-phosphate + UDP-N-acetyl-alpha-D-glucosamine = 1D-myo-inositol 2-acetamido-2-deoxy-alpha-D-glucopyranoside 3-phosphate + UDP + H(+). Its function is as follows. Catalyzes the transfer of a N-acetyl-glucosamine moiety to 1D-myo-inositol 3-phosphate to produce 1D-myo-inositol 2-acetamido-2-deoxy-glucopyranoside 3-phosphate in the mycothiol biosynthesis pathway. The sequence is that of D-inositol 3-phosphate glycosyltransferase from Nocardioides sp. (strain ATCC BAA-499 / JS614).